A 426-amino-acid polypeptide reads, in one-letter code: Dynein regulatory complex protein 10 (426 aa).

Disordered regions lie at residues 18–37 (TRIGPKTDPSKRPADPLKPL) and 399–426 (SKKKRGKGKAKGKEKGKQKGKEKGKGKK). An IQ domain is found at 377-406 (MVRAATLIQAFWKGYLVRSLLRSKKKRGKG). Residues 399-408 (SKKKRGKGKA) show a composition bias toward basic residues. Positions 409–426 (KGKEKGKQKGKEKGKGKK) are enriched in basic and acidic residues.

Belongs to the DRC10 family. Component of the nexin-dynein regulatory complex (N-DRC). Interacts with CFAP52.

The protein resides in the cytoplasm. The protein localises to the cytoskeleton. Its subcellular location is the flagellum axoneme. Component of the nexin-dynein regulatory complex (N-DRC), a key regulator of ciliary/flagellar motility which maintains the alignment and integrity of the distal axoneme and regulates microtubule sliding in motile axonemes. In Macaca fascicularis (Crab-eating macaque), this protein is Dynein regulatory complex protein 10 (IQCD).